The primary structure comprises 606 residues: Replication protein E1 (606 aa).

The Nuclear localization signal signature appears at 78-80 (KRK). Ser83 and Ser91 each carry phosphoserine; by host. Residues 90–99 (LSPRLESISL) carry the Nuclear export signal motif. The tract at residues 146–309 (GSGDVDIHYT…TILGHKSAEA (164 aa)) is DNA-binding region. The 151-residue stretch at 408-558 (INFIVFLTAL…FPMKADNTPQ (151 aa)) folds into the SF3 helicase domain. 434-441 (GPPNSGKS) contacts ATP. A Glycyl lysine isopeptide (Lys-Gly) (interchain with G-Cter in SUMO) cross-link involves residue Lys515. The segment at 581-606 (DQEEEGEDGESQRAFQCSARSANEHL) is disordered. Over residues 593 to 606 (RAFQCSARSANEHL) the composition is skewed to polar residues.

The protein belongs to the papillomaviridae E1 protein family. In terms of assembly, can form hexamers. Interacts with E2 protein; this interaction increases E1 DNA binding specificity. Interacts with host DNA polymerase subunit POLA2. Interacts with host single stranded DNA-binding protein RPA1. Interacts with host TOP1; this interaction stimulates the enzymatic activity of TOP1. Post-translationally, phosphorylated. Sumoylated.

It is found in the host nucleus. The catalysed reaction is Couples ATP hydrolysis with the unwinding of duplex DNA by translocating in the 3'-5' direction.. It carries out the reaction ATP + H2O = ADP + phosphate + H(+). In terms of biological role, ATP-dependent DNA 3'-5' helicase required for initiation of viral DNA replication. It forms a complex with the viral E2 protein. The E1-E2 complex binds to the replication origin which contains binding sites for both proteins. During the initial step, a dimer of E1 interacts with a dimer of protein E2 leading to a complex that binds the viral origin of replication with high specificity. Then, a second dimer of E1 displaces the E2 dimer in an ATP-dependent manner to form the E1 tetramer. Following this, two E1 monomers are added to each half of the site, which results in the formation of two E1 trimers on the viral ori. Subsequently, two hexamers will be created. The double hexamer acts as a bi-directional helicase machinery and unwinds the viral DNA and then recruits the host DNA polymerase to start replication. This is Replication protein E1 from Human papillomavirus 5.